The following is a 637-amino-acid chain: 3D-(3,5/4)-trihydroxycyclohexane-1,2-dione hydrolase (637 aa).

Thiamine diphosphate is bound at residue E66. Residues 442–522 are thiamine pyrophosphate binding; that stretch reads SLPGDLQRLW…INVLLFDNSG (81 aa). Mg(2+) contacts are provided by D493 and N520.

This sequence belongs to the TPP enzyme family. Mg(2+) serves as cofactor. Thiamine diphosphate is required as a cofactor.

It carries out the reaction 3D-3,5/4-trihydroxycyclohexane-1,2-dione + H2O = 5-deoxy-D-glucuronate + H(+). The protein operates within polyol metabolism; myo-inositol degradation into acetyl-CoA; acetyl-CoA from myo-inositol: step 3/7. Functionally, involved in the cleavage of the C1-C2 bond of 3D-(3,5/4)-trihydroxycyclohexane-1,2-dione (THcHDO) to yield 5-deoxy-glucuronate (5DG). This is 3D-(3,5/4)-trihydroxycyclohexane-1,2-dione hydrolase (iolD) from Bacillus subtilis (strain 168).